The primary structure comprises 131 residues: Sulfurtransferase TusD (131 aa).

The active-site Cysteine persulfide intermediate is C81.

It belongs to the DsrE/TusD family. In terms of assembly, heterohexamer, formed by a dimer of trimers. The hexameric TusBCD complex contains 2 copies each of TusB, TusC and TusD. The TusBCD complex interacts with TusE.

Its subcellular location is the cytoplasm. Part of a sulfur-relay system required for 2-thiolation of 5-methylaminomethyl-2-thiouridine (mnm(5)s(2)U) at tRNA wobble positions. Accepts sulfur from TusA and transfers it in turn to TusE. The polypeptide is Sulfurtransferase TusD (Photorhabdus laumondii subsp. laumondii (strain DSM 15139 / CIP 105565 / TT01) (Photorhabdus luminescens subsp. laumondii)).